A 331-amino-acid chain; its full sequence is MAPALPITLPSKMSLRSLKWSLLLLSLLSFLVMWYLSLPHYNVIERVNWMYFYEYEPIYRQDFHFTLREHSNCSHQNPFLVILVTSHPADVKARQAIRVTWGEKKSWWGYEVLTFFLLGQQAEREDKVLALSLEDEHLLYGDIIRQDFLDTYNNLTLKTIMAFRWVTEFCPNARYIMKTDTDVFINTGNLVKYLLNLNHSEKFFTGYPLIDNYSYRGFYQKTHISYQEYPFKVFPPYCSGLGYIMSRDLVPRIYEMMSHVKPIKFEDVYVGICLNLLKVDIHIPEDTNLFFLYRIHLDVCQLRRVIAAHGFSSKEIITFWQVMLRNTTCHY.

Over 1–20 (MAPALPITLPSKMSLRSLKW) the chain is Cytoplasmic. Residues 21-43 (SLLLLSLLSFLVMWYLSLPHYNV) traverse the membrane as a helical; Signal-anchor for type II membrane protein segment. Over 44–331 (IERVNWMYFY…VMLRNTTCHY (288 aa)) the chain is Lumenal. N-linked (GlcNAc...) asparagine glycans are attached at residues asparagine 72, asparagine 154, asparagine 198, asparagine 212, and asparagine 326.

This sequence belongs to the glycosyltransferase 31 family. Requires Mg(2+) as cofactor.

It localises to the golgi apparatus membrane. It catalyses the reaction a globoside Gb3Cer (d18:1(4E)) + UDP-N-acetyl-alpha-D-galactosamine = a globoside Gb4Cer (d18:1(4E)) + UDP + H(+). The protein operates within protein modification; protein glycosylation. Functionally, transfers N-acetylgalactosamine onto globotriaosylceramide. Plays a critical role in preimplantation stage embryonic development. The chain is UDP-GalNAc:beta-1,3-N-acetylgalactosaminyltransferase 1 (B3GALNT1) from Sus scrofa (Pig).